The sequence spans 502 residues: Maturase K (502 aa).

Belongs to the intron maturase 2 family. MatK subfamily.

The protein resides in the plastid. Its subcellular location is the chloroplast. Its function is as follows. Usually encoded in the trnK tRNA gene intron. Probably assists in splicing its own and other chloroplast group II introns. The polypeptide is Maturase K (Fremontodendron californicum (California flannelbush)).